Consider the following 401-residue polypeptide: MSFDLASRLASRRAEDLYRQRPLLESAQGPDVVVDGQPLLAFCSNDYLGLANHPEVIAALRAGAERWGVGGGASHLVVGHSGPHHELELALAEFTGRPRALLFSTGYMANLGAVTALVGKGDTVLEDRLNHASLLDAGLLSGARFSRYLHNDPASLAARLDKAEGNTLVVTDGVFSMDGNLADLPALAAVAQARGAWLMVDDAHGFGPLGASGGGIVEHFGLGQEQVPVLIGTLGKGFGTAGAFVAGSEELIETLIQYARPYIYTTSQPPAVACATLKSLELLRRESWRRQHLAALIARFRHGAEALGLTLMDSFTPIQPILVGGSRQAVALAGMLRARGIMVGAIRPPTVPANSARLRVTLSAAHSEAQVDRLLEALGESWRQLSSSLLAEIEAEEGDDA.

Substrate is bound at residue arginine 19. 106–107 contacts pyridoxal 5'-phosphate; it reads GY. Histidine 131 is a substrate binding site. 3 residues coordinate pyridoxal 5'-phosphate: serine 176, histidine 204, and threonine 233. Lysine 236 is modified (N6-(pyridoxal phosphate)lysine). Residue threonine 350 coordinates substrate.

This sequence belongs to the class-II pyridoxal-phosphate-dependent aminotransferase family. BioF subfamily. Homodimer. Requires pyridoxal 5'-phosphate as cofactor.

It carries out the reaction 6-carboxyhexanoyl-[ACP] + L-alanine + H(+) = (8S)-8-amino-7-oxononanoate + holo-[ACP] + CO2. The protein operates within cofactor biosynthesis; biotin biosynthesis. Catalyzes the decarboxylative condensation of pimeloyl-[acyl-carrier protein] and L-alanine to produce 8-amino-7-oxononanoate (AON), [acyl-carrier protein], and carbon dioxide. This chain is 8-amino-7-oxononanoate synthase, found in Pseudomonas aeruginosa (strain LESB58).